Reading from the N-terminus, the 494-residue chain is Probable cytosol aminopeptidase (494 aa).

2 residues coordinate Mn(2+): lysine 260 and aspartate 265. Lysine 272 is a catalytic residue. Positions 283, 342, and 344 each coordinate Mn(2+). The active site involves arginine 346.

It belongs to the peptidase M17 family. Mn(2+) is required as a cofactor.

It is found in the cytoplasm. It catalyses the reaction Release of an N-terminal amino acid, Xaa-|-Yaa-, in which Xaa is preferably Leu, but may be other amino acids including Pro although not Arg or Lys, and Yaa may be Pro. Amino acid amides and methyl esters are also readily hydrolyzed, but rates on arylamides are exceedingly low.. The catalysed reaction is Release of an N-terminal amino acid, preferentially leucine, but not glutamic or aspartic acids.. Functionally, presumably involved in the processing and regular turnover of intracellular proteins. Catalyzes the removal of unsubstituted N-terminal amino acids from various peptides. The polypeptide is Probable cytosol aminopeptidase (Bacillus anthracis (strain CDC 684 / NRRL 3495)).